Here is a 132-residue protein sequence, read N- to C-terminus: Ribosome-binding factor A (132 aa).

The interval 113–132 (EANSTRAKDDDEADAPAKDD) is disordered.

Belongs to the RbfA family. In terms of assembly, monomer. Binds 30S ribosomal subunits, but not 50S ribosomal subunits or 70S ribosomes.

Its subcellular location is the cytoplasm. Functionally, one of several proteins that assist in the late maturation steps of the functional core of the 30S ribosomal subunit. Associates with free 30S ribosomal subunits (but not with 30S subunits that are part of 70S ribosomes or polysomes). Required for efficient processing of 16S rRNA. May interact with the 5'-terminal helix region of 16S rRNA. The chain is Ribosome-binding factor A from Burkholderia ambifaria (strain MC40-6).